The primary structure comprises 122 residues: Large ribosomal subunit protein uL14 (122 aa).

This sequence belongs to the universal ribosomal protein uL14 family. In terms of assembly, part of the 50S ribosomal subunit. Forms a cluster with proteins L3 and L19. In the 70S ribosome, L14 and L19 interact and together make contacts with the 16S rRNA in bridges B5 and B8.

Its function is as follows. Binds to 23S rRNA. Forms part of two intersubunit bridges in the 70S ribosome. The chain is Large ribosomal subunit protein uL14 from Gloeothece citriformis (strain PCC 7424) (Cyanothece sp. (strain PCC 7424)).